The primary structure comprises 461 residues: tRNA modification GTPase MnmE (461 aa).

Residues Arg23, Glu88, and Arg127 each contribute to the (6S)-5-formyl-5,6,7,8-tetrahydrofolate site. Positions 223–383 (GLNTVIVGKP…LKECIKNLFF (161 aa)) constitute a TrmE-type G domain. Asn233 contacts K(+). Residues 233 to 238 (NVGKSS), 252 to 258 (TEIPGTT), and 277 to 280 (DTAG) contribute to the GTP site. Ser237 is a Mg(2+) binding site. K(+) contacts are provided by Thr252, Ile254, and Thr257. Thr258 is a binding site for Mg(2+). Lys461 serves as a coordination point for (6S)-5-formyl-5,6,7,8-tetrahydrofolate.

The protein belongs to the TRAFAC class TrmE-Era-EngA-EngB-Septin-like GTPase superfamily. TrmE GTPase family. As to quaternary structure, homodimer. Heterotetramer of two MnmE and two MnmG subunits. It depends on K(+) as a cofactor.

The protein localises to the cytoplasm. Exhibits a very high intrinsic GTPase hydrolysis rate. Involved in the addition of a carboxymethylaminomethyl (cmnm) group at the wobble position (U34) of certain tRNAs, forming tRNA-cmnm(5)s(2)U34. The chain is tRNA modification GTPase MnmE from Clostridium botulinum (strain Langeland / NCTC 10281 / Type F).